We begin with the raw amino-acid sequence, 227 residues long: MAHPVQLGLQDATSPVMEELITFHDQALMAMFLISFLILYALSSTLTTKLTNTNITDAQEMETIWTILPAVILILIALPSLRILYMTDEINNPSFTIKSIGHQWYWTYEYTDYGGLIFNSYMLPPLFLNPGDLRLLEVDNRVVLPIEAPVRMMITSQDVLHSWTIPTLGLKTDAVPGRLNQTVFTATRPGVYYGQCSEICGANHSFMPIVAELIPLKIFEMGPVFTL.

At 1-14 (MAHPVQLGLQDATS) the chain is on the mitochondrial intermembrane side. A helical membrane pass occupies residues 15–45 (PVMEELITFHDQALMAMFLISFLILYALSST). Residues 46–59 (LTTKLTNTNITDAQ) lie on the Mitochondrial matrix side of the membrane. A helical transmembrane segment spans residues 60–87 (EMETIWTILPAVILILIALPSLRILYMT). Residues 88–227 (DEINNPSFTI…IFEMGPVFTL (140 aa)) are Mitochondrial intermembrane-facing. His161, Cys196, Glu198, Cys200, His204, and Met207 together coordinate Cu cation. Glu198 lines the Mg(2+) pocket.

Belongs to the cytochrome c oxidase subunit 2 family. Component of the cytochrome c oxidase (complex IV, CIV), a multisubunit enzyme composed of 14 subunits. The complex is composed of a catalytic core of 3 subunits MT-CO1, MT-CO2 and MT-CO3, encoded in the mitochondrial DNA, and 11 supernumerary subunits COX4I, COX5A, COX5B, COX6A, COX6B, COX6C, COX7A, COX7B, COX7C, COX8 and NDUFA4, which are encoded in the nuclear genome. The complex exists as a monomer or a dimer and forms supercomplexes (SCs) in the inner mitochondrial membrane with NADH-ubiquinone oxidoreductase (complex I, CI) and ubiquinol-cytochrome c oxidoreductase (cytochrome b-c1 complex, complex III, CIII), resulting in different assemblies (supercomplex SCI(1)III(2)IV(1) and megacomplex MCI(2)III(2)IV(2)). Found in a complex with TMEM177, COA6, COX18, COX20, SCO1 and SCO2. Interacts with TMEM177 in a COX20-dependent manner. Interacts with COX20. Interacts with COX16. It depends on Cu cation as a cofactor.

Its subcellular location is the mitochondrion inner membrane. It carries out the reaction 4 Fe(II)-[cytochrome c] + O2 + 8 H(+)(in) = 4 Fe(III)-[cytochrome c] + 2 H2O + 4 H(+)(out). Component of the cytochrome c oxidase, the last enzyme in the mitochondrial electron transport chain which drives oxidative phosphorylation. The respiratory chain contains 3 multisubunit complexes succinate dehydrogenase (complex II, CII), ubiquinol-cytochrome c oxidoreductase (cytochrome b-c1 complex, complex III, CIII) and cytochrome c oxidase (complex IV, CIV), that cooperate to transfer electrons derived from NADH and succinate to molecular oxygen, creating an electrochemical gradient over the inner membrane that drives transmembrane transport and the ATP synthase. Cytochrome c oxidase is the component of the respiratory chain that catalyzes the reduction of oxygen to water. Electrons originating from reduced cytochrome c in the intermembrane space (IMS) are transferred via the dinuclear copper A center (CU(A)) of subunit 2 and heme A of subunit 1 to the active site in subunit 1, a binuclear center (BNC) formed by heme A3 and copper B (CU(B)). The BNC reduces molecular oxygen to 2 water molecules using 4 electrons from cytochrome c in the IMS and 4 protons from the mitochondrial matrix. The chain is Cytochrome c oxidase subunit 2 (MT-CO2) from Papio anubis (Olive baboon).